Reading from the N-terminus, the 104-residue chain is ATP-dependent Clp protease adapter protein ClpS (104 aa).

It belongs to the ClpS family. As to quaternary structure, binds to the N-terminal domain of the chaperone ClpA.

Its function is as follows. Involved in the modulation of the specificity of the ClpAP-mediated ATP-dependent protein degradation. The protein is ATP-dependent Clp protease adapter protein ClpS of Burkholderia thailandensis (strain ATCC 700388 / DSM 13276 / CCUG 48851 / CIP 106301 / E264).